We begin with the raw amino-acid sequence, 87 residues long: UPF0235 protein TGRD_618 (87 aa).

This sequence belongs to the UPF0235 family.

The protein is UPF0235 protein TGRD_618 of Endomicrobium trichonymphae.